The chain runs to 202 residues: Small ribosomal subunit protein uS4c (202 aa).

The region spanning 90–153 is the S4 RNA-binding domain; it reads MRLDNVIFRL…KSETIISKNI (64 aa).

Belongs to the universal ribosomal protein uS4 family. In terms of assembly, part of the 30S ribosomal subunit. Contacts protein S5. The interaction surface between S4 and S5 is involved in control of translational fidelity.

The protein resides in the plastid. The protein localises to the chloroplast. Functionally, one of the primary rRNA binding proteins, it binds directly to 16S rRNA where it nucleates assembly of the body of the 30S subunit. In terms of biological role, with S5 and S12 plays an important role in translational accuracy. The sequence is that of Small ribosomal subunit protein uS4c (rps4) from Sphaerocarpos donnelli (Liverwort).